The chain runs to 460 residues: Argininosuccinate lyase (460 aa).

It belongs to the lyase 1 family. Argininosuccinate lyase subfamily.

The protein localises to the cytoplasm. It catalyses the reaction 2-(N(omega)-L-arginino)succinate = fumarate + L-arginine. Its pathway is amino-acid biosynthesis; L-arginine biosynthesis; L-arginine from L-ornithine and carbamoyl phosphate: step 3/3. This is Argininosuccinate lyase from Prosthecochloris aestuarii (strain DSM 271 / SK 413).